Consider the following 111-residue polypeptide: BET1-like protein (111 aa).

Topologically, residues 1 to 86 (MADWTRAQSS…MARSGRDNRK (86 aa)) are cytoplasmic. Phosphoserine occurs at positions 9 and 37. The t-SNARE coiled-coil homology domain occupies 15-77 (DILDRENKRM…TGSVKRFSTM (63 aa)). The chain crosses the membrane as a helical; Anchor for type IV membrane protein span at residues 87–107 (LLCGMAVVLIVAFFILSYLLS). The Lumenal portion of the chain corresponds to 108–111 (RTRT).

As to quaternary structure, component of a SNARE complex consisting of STX5, YKT6, GOSR1 and BET1L. Interacts with STX5.

It is found in the golgi apparatus membrane. The protein resides in the golgi apparatus. The protein localises to the trans-Golgi network membrane. In terms of biological role, vesicle SNARE required for targeting and fusion of retrograde transport vesicles with the Golgi complex. Required for the integrity of the Golgi complex. In Mus musculus (Mouse), this protein is BET1-like protein.